An 86-amino-acid chain; its full sequence is Large ribosomal subunit protein bL27c (86 aa).

Positions 1 to 20 (MAHKKGSGSTRNGRDSNAQR) are disordered. Over residues 7–19 (SGSTRNGRDSNAQ) the composition is skewed to polar residues.

It belongs to the bacterial ribosomal protein bL27 family.

Its subcellular location is the plastid. It localises to the chloroplast. The chain is Large ribosomal subunit protein bL27c (rpl27) from Guillardia theta (Cryptophyte).